A 372-amino-acid polypeptide reads, in one-letter code: NAD(P)H-quinone oxidoreductase subunit 1 (372 aa).

The next 8 membrane-spanning stretches (helical) occupy residues 29 to 49 (WIPFPSFLMIIGATVGVLVVV), 97 to 117 (WLFTLGPVLVVLPVFVSYLIV), 130 to 150 (VGIFFWIALSSIAPIGLLMAG), 176 to 196 (LALSVLAIVMMSNSLSTIDIV), 204 to 224 (ILGWNIWRQPVGFFIFWIAAL), 254 to 274 (FALFYLGSYVNLVLSALVFAI), 308 to 328 (SLGITMTVLKAYFLVFIAVLM), and 347 to 367 (FLLPVSLVNLLLTAALKLAFP).

This sequence belongs to the complex I subunit 1 family. As to quaternary structure, NDH-1 is composed of at least 11 different subunits.

It localises to the cellular thylakoid membrane. It carries out the reaction a plastoquinone + NADH + (n+1) H(+)(in) = a plastoquinol + NAD(+) + n H(+)(out). The catalysed reaction is a plastoquinone + NADPH + (n+1) H(+)(in) = a plastoquinol + NADP(+) + n H(+)(out). In terms of biological role, NDH-1 shuttles electrons from an unknown electron donor, via FMN and iron-sulfur (Fe-S) centers, to quinones in the respiratory and/or the photosynthetic chain. The immediate electron acceptor for the enzyme in this species is believed to be plastoquinone. Couples the redox reaction to proton translocation, and thus conserves the redox energy in a proton gradient. This is NAD(P)H-quinone oxidoreductase subunit 1 from Crocosphaera subtropica (strain ATCC 51142 / BH68) (Cyanothece sp. (strain ATCC 51142)).